Consider the following 299-residue polypeptide: Probable lipid kinase YegS-like (299 aa).

Residues 1 to 129 form the DAGKc domain; sequence MSERKALLIL…IDLGEVGGQM (129 aa). Residues T39, 65–71, and T92 each bind ATP; that span reads GDGTLRD. Mg(2+)-binding residues include L210, D213, and L215. Residue E268 is the Proton acceptor of the active site.

It belongs to the diacylglycerol/lipid kinase family. YegS lipid kinase subfamily. Requires Mg(2+) as cofactor. Ca(2+) serves as cofactor.

Its subcellular location is the cytoplasm. Functionally, probably phosphorylates lipids; the in vivo substrate is unknown. In Pseudomonas fluorescens (strain ATCC BAA-477 / NRRL B-23932 / Pf-5), this protein is Probable lipid kinase YegS-like.